The primary structure comprises 126 residues: Late histone H2A.3, gonadal (126 aa).

Residues 1–18 (MSGRGKGAKAKGKAKSRS) show a composition bias toward basic residues. The segment at 1-21 (MSGRGKGAKAKGKAKSRSSRA) is disordered. Ser-2 carries the post-translational modification N-acetylserine. A Phosphoserine modification is found at Ser-2. Gln-104 carries the N5-methylglutamine modification. Lys-119 is covalently cross-linked (Glycyl lysine isopeptide (Lys-Gly) (interchain with G-Cter in ubiquitin)).

This sequence belongs to the histone H2A family. In terms of assembly, the nucleosome is a histone octamer containing two molecules each of H2A, H2B, H3 and H4 assembled in one H3-H4 heterotetramer and two H2A-H2B heterodimers. The octamer wraps approximately 147 bp of DNA. Monoubiquitination of Lys-119 gives a specific tag for epigenetic transcriptional repression. In terms of processing, phosphorylation of Ser-2 directly represses transcription.

The protein localises to the nucleus. Its subcellular location is the chromosome. In terms of biological role, core component of nucleosome. Nucleosomes wrap and compact DNA into chromatin, limiting DNA accessibility to the cellular machineries which require DNA as a template. Histones thereby play a central role in transcription regulation, DNA repair, DNA replication and chromosomal stability. DNA accessibility is regulated via a complex set of post-translational modifications of histones, also called histone code, and nucleosome remodeling. This Psammechinus miliaris (Green sea urchin) protein is Late histone H2A.3, gonadal.